A 133-amino-acid chain; its full sequence is Profilin Sal k 4.0201 (133 aa).

An intrachain disulfide couples C95 to C117.

The protein belongs to the profilin family. As to quaternary structure, occurs in many kinds of cells as a complex with monomeric actin in a 1:1 ratio. Expressed in pollen (at protein and mRNA level).

It is found in the cytoplasm. The protein localises to the cytoskeleton. Functionally, binds to actin and affects the structure of the cytoskeleton. At high concentrations, profilin prevents the polymerization of actin, whereas it enhances it at low concentrations. This is Profilin Sal k 4.0201 from Kali turgidum (Prickly saltwort).